Reading from the N-terminus, the 628-residue chain is MGSIDGTRPKLSKDNKKLLKKQAKAKHILLKHEGIETVLHLSQSLVVANGGLGNGVSRQQLLAVLERCGKVETLLMPPNKPYAFVTYSSAEEAIKAYSSLSGQELCGEDAEQPITLYLSFVEKVVVKEVLSPSLPPGLIIVEDFVSPEQERTMLESIDWDSETSSQKSLKHRQVKHYGYEFRYDNNNVDKDKPLPGGLPDFCTEALRKCVQRGLIKHDPDQLTINQYEPGQGIPPHVDTHSAFEDEILSLSLGAEIVMDFKHPNGSVVPVMLPQRSLLIMSGESRYLWTHGITPRKFDVIQVSEGQTVGTISGNSGELTLSKRSTRTSFTFRKVRHSPCDCAFPSECDSQQTQKEKSPPTVGELGASTLEREYVHKVYDDIAGHFSSTRHTPWPKIGDFLASLPKGSLVADVGCGNGKYLGVNKDLCMIGCDRSKNLVDICRERTFEAFVCDALSVPFRAGAFDACISIAVIHHFATEERRIAALQELIRLLRKGGKALIYVWALEQEYKKNKSKYLKESKTSQGPSSDALGTNLAVKAPLPIHTNRTSFHSQDLLVPWHLKPTNKSKVTPENKEQNEKEHGPDSVYHRFYHVFCEGELEAMCNRLSNVAVQHSYHDQGNWCVILEKL.

An RRM domain is found at 43 to 123 (QSLVVANGGL…ITLYLSFVEK (81 aa)). Residues 218 to 335 (DPDQLTINQY…RTSFTFRKVR (118 aa)) form the Fe2OG dioxygenase domain. Residue 225–227 (NQY) participates in 2-oxoglutarate binding. Residues H236 and D238 each contribute to the Fe cation site. Residue H240 coordinates Zn(2+). A Fe cation-binding site is contributed by H290. Residues R326 and R332 each contribute to the 2-oxoglutarate site. Zn(2+)-binding residues include C339, C341, and C347. Residues 410–628 (ADVGCGNGKY…GNWCVILEKL (219 aa)) form a methyltransferase domain region. The tract at residues 563 to 582 (PTNKSKVTPENKEQNEKEHG) is disordered. Basic and acidic residues predominate over residues 569 to 582 (VTPENKEQNEKEHG).

This sequence belongs to the alkB family. Fe(2+) is required as a cofactor.

Its subcellular location is the cytoplasm. It is found in the nucleus. The enzyme catalyses 5-(carboxymethyl)uridine(34) in tRNA + S-adenosyl-L-methionine = 5-(2-methoxy-2-oxoethyl)uridine(34) in tRNA + S-adenosyl-L-homocysteine. Functionally, catalyzes the methylation of 5-carboxymethyl uridine to 5-methylcarboxymethyl uridine at the wobble position of the anticodon loop in tRNA via its methyltransferase domain. Catalyzes the last step in the formation of 5-methylcarboxymethyl uridine at the wobble position of the anticodon loop in target tRNA. Has a preference for tRNA(Arg) and tRNA(Glu), and does not bind tRNA(Lys). Binds tRNA and catalyzes the iron and alpha-ketoglutarate dependent hydroxylation of 5-methylcarboxymethyl uridine at the wobble position of the anticodon loop in tRNA via its dioxygenase domain, giving rise to 5-(S)-methoxycarbonylhydroxymethyluridine; has a preference for tRNA(Gly). Required for normal survival after DNA damage. May inhibit apoptosis and promote cell survival and angiogenesis. This chain is tRNA (carboxymethyluridine(34)-5-O)-methyltransferase alkbh8 (alkbh8), found in Xenopus tropicalis (Western clawed frog).